The sequence spans 358 residues: Methylthioribose-1-phosphate isomerase (358 aa).

Substrate contacts are provided by residues 54–56 (RGA), arginine 96, and glutamine 205. Aspartate 246 serves as the catalytic Proton donor. 256 to 257 (NK) is a substrate binding site.

It belongs to the eIF-2B alpha/beta/delta subunits family. MtnA subfamily.

The catalysed reaction is 5-(methylsulfanyl)-alpha-D-ribose 1-phosphate = 5-(methylsulfanyl)-D-ribulose 1-phosphate. Its pathway is amino-acid biosynthesis; L-methionine biosynthesis via salvage pathway; L-methionine from S-methyl-5-thio-alpha-D-ribose 1-phosphate: step 1/6. In terms of biological role, catalyzes the interconversion of methylthioribose-1-phosphate (MTR-1-P) into methylthioribulose-1-phosphate (MTRu-1-P). In Pseudomonas syringae pv. syringae (strain B728a), this protein is Methylthioribose-1-phosphate isomerase.